Consider the following 634-residue polypeptide: uncharacterized protein (634 aa).

An N-terminal signal peptide occupies residues 1–40 (MWLQQRLKGLPGLLSSSWARRLLCLLGLLVLLLWFASSGA). Residues 41-589 (RRAAGGLHLP…DEHMAQQDPG (549 aa)) are Extracellular-facing. N-linked (GlcNAc...) asparagine glycosylation is present at Asn363. Residues 590–610 (LPFLFWFSVASLITLFHLFLF) traverse the membrane as a helical segment. The Cytoplasmic portion of the chain corresponds to 611–634 (KLIYNEYCGPGAKPLFRSKEDPSV).

It is found in the membrane. This is an uncharacterized protein from Mus musculus (Mouse).